A 310-amino-acid polypeptide reads, in one-letter code: Deoxyribonuclease gamma (310 aa).

The signal sequence occupies residues 1–25 (MSLYPASPYLASLLLFILALHGALS). A Bipartite nuclear localization signal motif is present at residues 40 to 56 (KKENHNAMDIIVKIIKR). Residues Glu105 and His160 contribute to the active site. Cys199 and Cys236 are disulfide-bonded. Positions 289-310 (SRAFTNSRKSVSLKKKKKGSRS) are not required for free DNA-nuclease activity but required for activity towards liposome-coated DNA. The Nuclear localization signal signature appears at 301 to 307 (LKKKKKG).

The protein belongs to the DNase I family. In terms of assembly, monomer. The cofactor is Ca(2+). It depends on Mg(2+) as a cofactor. In terms of processing, seems to be synthesized as an inactive precursor protein and converted into an active mature enzyme by removal of the N-terminal precursor peptide during apoptosis. Poly-ADP-ribosylated by PARP1. ADP-ribosylation negatively regulates enzymatic activity during apoptosis. As to expression, detected at high levels in spleen, lymph nodes, thymus and liver. Observed also in kidney and testis, but not in brain or heart.

The protein resides in the nucleus. It localises to the secreted. Inhibited by zinc. In terms of biological role, has DNA hydrolytic activity. Is capable of both single- and double-stranded DNA cleavage, producing DNA fragments with 3'-OH ends. Can cleave chromatin to nucleosomal units and cleaves nucleosomal and liposome-coated DNA. Acts in internucleosomal DNA fragmentation (INDF) during apoptosis and necrosis. The role in apoptosis includes myogenic and neuronal differentiation, and BCR-mediated clonal deletion of self-reactive B cells. Is active on chromatin in apoptotic cell-derived membrane-coated microparticles and thus suppresses anti-DNA autoimmunity. Together with DNASE1, plays a key role in degrading neutrophil extracellular traps (NETs). NETs are mainly composed of DNA fibers and are released by neutrophils to bind pathogens during inflammation. Degradation of intravascular NETs by DNASE1 and DNASE1L3 is required to prevent formation of clots that obstruct blood vessels and cause organ damage following inflammation. This Rattus norvegicus (Rat) protein is Deoxyribonuclease gamma (Dnase1l3).